Consider the following 397-residue polypeptide: Tryptophan synthase beta chain (397 aa).

N6-(pyridoxal phosphate)lysine is present on K87.

The protein belongs to the TrpB family. As to quaternary structure, tetramer of two alpha and two beta chains. Pyridoxal 5'-phosphate is required as a cofactor.

The catalysed reaction is (1S,2R)-1-C-(indol-3-yl)glycerol 3-phosphate + L-serine = D-glyceraldehyde 3-phosphate + L-tryptophan + H2O. It participates in amino-acid biosynthesis; L-tryptophan biosynthesis; L-tryptophan from chorismate: step 5/5. Its function is as follows. The beta subunit is responsible for the synthesis of L-tryptophan from indole and L-serine. The protein is Tryptophan synthase beta chain of Cronobacter sakazakii (strain ATCC BAA-894) (Enterobacter sakazakii).